Here is a 389-residue protein sequence, read N- to C-terminus: tRNA (cytosine(72)-C(5))-methyltransferase (389 aa).

A PUA domain is found at 92 to 167 (LPVVVANKYA…LAVEVTLPKF (76 aa)). S-adenosyl-L-methionine contacts are provided by residues 209–215 (AAAPGGK), D233, R238, D260, D277, and Y304. Catalysis depends on C327, which acts as the Nucleophile.

This sequence belongs to the class I-like SAM-binding methyltransferase superfamily. RsmB/NOP family.

The catalysed reaction is cytidine(72) in tRNA + S-adenosyl-L-methionine = 5-methylcytidine(72) in tRNA + S-adenosyl-L-homocysteine + H(+). The enzyme catalyses cytidine(72) in tRNA(Thr) + S-adenosyl-L-methionine = 5-methylcytidine(72) in tRNA(Thr) + S-adenosyl-L-homocysteine + H(+). It catalyses the reaction cytidine(72) in tRNA(Cys) + S-adenosyl-L-methionine = 5-methylcytidine(72) in tRNA(Cys) + S-adenosyl-L-homocysteine + H(+). S-adenosyl-L-methionine-dependent methyltransferase that specifically methylates the C5 position of cytosine 72 in several tRNAs. This modification appears to slightly promote the thermal stability of P.horikoshii tRNAs, but does not affect their amino acid accepting activity. Four elements in the acceptor stems of tRNAs are essential for substrate recognition by this enzyme: the target site C72, the 3'-CCA terminus, U73 or G73, and the second base pair C2:G71. The sequence is that of tRNA (cytosine(72)-C(5))-methyltransferase from Pyrococcus horikoshii (strain ATCC 700860 / DSM 12428 / JCM 9974 / NBRC 100139 / OT-3).